A 153-amino-acid polypeptide reads, in one-letter code: ORM1-like protein 2 (153 aa).

Residues 1-21 (MNVGVAHSEVNPNTRVMSSRG) are Cytoplasmic-facing. The next 2 membrane-spanning stretches (helical) occupy residues 22–42 (IWLA…SIPF) and 43–63 (FSIP…MYLL). The Cytoplasmic portion of the chain corresponds to 64-105 (LHTVKGTPFETPDQGKDRLLTHWEQIDYGMQCTSSRKFLSIS). Residues 106–126 (PVVLYLLTSFYIKYDPAHFMI) traverse the membrane as a helical segment. Topologically, residues 127-153 (NTASLLSVLLPKLPQFHGVRVFGINKY) are extracellular.

The protein belongs to the ORM family. As to quaternary structure, ceramide-sensitive subunit of the serine palmitoyltransferase (SPT) complex, which is also composed of SPTLC1, SPTLC2/3 and SPTSSA/B.

The protein resides in the endoplasmic reticulum membrane. Plays an essential role in the homeostatic regulation of sphingolipid de novo biosynthesis by modulating the activity of the serine palmitoyltransferase (SPT) in response to ceramide levels. When complexed to SPT, the binding of ceramides to its N-terminus stabilizes a conformation that block SPT substrate entry, hence preventing SPT catalytic activity. Through this mechanism, maintains ceramide levels at sufficient concentrations for the production of complex sphingolipids, but which prevents the accumulation of ceramides to levels that trigger apoptosis. This Gallus gallus (Chicken) protein is ORM1-like protein 2 (ORMDL2).